We begin with the raw amino-acid sequence, 417 residues long: Serine hydroxymethyltransferase 3 (417 aa).

Residues Leu121 and 125-127 (GHL) each bind (6S)-5,6,7,8-tetrahydrofolate. The residue at position 230 (Lys230) is an N6-(pyridoxal phosphate)lysine. Residue 355 to 357 (SPF) coordinates (6S)-5,6,7,8-tetrahydrofolate.

It belongs to the SHMT family. Homodimer. Pyridoxal 5'-phosphate is required as a cofactor.

Its subcellular location is the cytoplasm. The catalysed reaction is (6R)-5,10-methylene-5,6,7,8-tetrahydrofolate + glycine + H2O = (6S)-5,6,7,8-tetrahydrofolate + L-serine. The protein operates within one-carbon metabolism; tetrahydrofolate interconversion. It functions in the pathway amino-acid biosynthesis; glycine biosynthesis; glycine from L-serine: step 1/1. Its function is as follows. Catalyzes the reversible interconversion of serine and glycine with tetrahydrofolate (THF) serving as the one-carbon carrier. This reaction serves as the major source of one-carbon groups required for the biosynthesis of purines, thymidylate, methionine, and other important biomolecules. Also exhibits THF-independent aldolase activity toward beta-hydroxyamino acids, producing glycine and aldehydes, via a retro-aldol mechanism. This is Serine hydroxymethyltransferase 3 from Pseudomonas fluorescens (strain Pf0-1).